Reading from the N-terminus, the 1246-residue chain is Superkiller complex protein 2 (1246 aa).

The tract at residues 220–246 is disordered; the sequence is LGGGDEDENEAVGQPGGPRGDTVSASP. A phosphoserine mark is found at serine 245 and serine 256. The Helicase ATP-binding domain occupies 319-475; it reads ILHLERHDSV…WIGRLKRRQI (157 aa). 332–339 is an ATP binding site; sequence AHTSAGKT. The DEVH box motif lies at 423 to 426; it reads DEVH. A Helicase C-terminal domain is found at 585–755; it reads GLTSLDLTTS…LTYTMILNLL (171 aa).

Belongs to the helicase family. SKI2 subfamily. Component of the SKI complex which consists of SKIC2, SKIC3 and SKIC8. Interacts with HBS1L isoform 2.

Its subcellular location is the nucleus. It localises to the cytoplasm. It catalyses the reaction ATP + H2O = ADP + phosphate + H(+). Its function is as follows. Helicase component of the SKI complex, a multiprotein complex that assists the RNA-degrading exosome during the mRNA decay and quality-control pathways. The SKI complex catalyzes mRNA extraction from 80S ribosomal complexes in the 3'-5' direction and channels mRNA to the cytosolic exosome for degradation. SKI-mediated extraction of mRNA from stalled ribosomes allow binding of the Pelota-HBS1L complex and subsequent ribosome disassembly by ABCE1 for ribosome recycling. In the nucleus, the SKI complex associates with transcriptionally active genes in a manner dependent on PAF1 complex (PAF1C). This is Superkiller complex protein 2 from Homo sapiens (Human).